A 761-amino-acid chain; its full sequence is MTNTVLEWMVEDAQRLAECRHDHPFAVLGPQPQEDGTWVLRAWMPEAEGVTLLLGDQEMGMSTPHHPWIFEASVAHDPGCAYRLRVHRGGITHEQHDPWAFRQDWMGEMDRHLFAEGNHHHIWRRMGAHHCEREGIPGVMFCLWAPHARSVSVIGDLNSWDGRHHPMQQRLGGIWELFVPGLAEGQLYKYEIRTQEGHCYQKADPYGFQHEVRPDTSSVVSHLDGFHWTDTDWIQKRDSSNPLDQPIAVYEMHLGSWIHAAADEPFIEADGTPRAPVPAADLKPGARLLTYPELADRLIPYVKERGFTHIELMPITEHPFDGSWGYQVTGWYAPTSRYGTPDEFRAFVDRCHAEGIGVIIDWVPGHFPRDSHGLAFFDGCHLYEHADPRIGEHKEWGTLIFNYSRNEVRNFLVANLVFWFDQFHIDGIRVDAVASMLYRDYLRPDGEWLPNEHGGRENTEAVQFLQQANHVLFQHFPGALSIAEESTTWPMVTQPTDIGGLGFNLKWNMGWMHDMLDYFELDPWFRQFHQNNITFSIWYTYTENFMLALSHDEVVHGKSNLLHKMPGDDWQKYANTRALLAYMWTHPGKKTIFMGMEFGQRAEWNVWGDLQWDLLNYEPHQGVQRMVDDLNGLYKSEPALWRDDFDQYGFQWIDCNDNRHSVISFMRRESTSGTWLVVVANFTPQSHSHYRVGVPLAGYYEEIFNTDASKYGGSNLGNMGGKPTEEWGIHGYENSLDLCLPPLSLMVFKHDPKKSLNPVQE.

The active-site Nucleophile is the Asp431. Residue Glu484 is the Proton donor of the active site.

Belongs to the glycosyl hydrolase 13 family. GlgB subfamily. As to quaternary structure, monomer.

The catalysed reaction is Transfers a segment of a (1-&gt;4)-alpha-D-glucan chain to a primary hydroxy group in a similar glucan chain.. The protein operates within glycan biosynthesis; glycogen biosynthesis. In terms of biological role, catalyzes the formation of the alpha-1,6-glucosidic linkages in glycogen by scission of a 1,4-alpha-linked oligosaccharide from growing alpha-1,4-glucan chains and the subsequent attachment of the oligosaccharide to the alpha-1,6 position. This Synechococcus sp. (strain WH7803) protein is 1,4-alpha-glucan branching enzyme GlgB.